Consider the following 209-residue polypeptide: Large ribosomal subunit protein bL25 (209 aa).

The interval 183-209 (TAGERPAAEPAAAPGAAPAAGPEEAEE) is disordered. Low complexity predominate over residues 184–209 (AGERPAAEPAAAPGAAPAAGPEEAEE).

The protein belongs to the bacterial ribosomal protein bL25 family. CTC subfamily. In terms of assembly, part of the 50S ribosomal subunit; part of the 5S rRNA/L5/L18/L25 subcomplex. Contacts the 5S rRNA. Binds to the 5S rRNA independently of L5 and L18.

Functionally, this is one of the proteins that binds to the 5S RNA in the ribosome where it forms part of the central protuberance. This is Large ribosomal subunit protein bL25 from Pelotomaculum thermopropionicum (strain DSM 13744 / JCM 10971 / SI).